The sequence spans 236 residues: Uridylate kinase (236 aa).

Residue 10-13 (KLSG) coordinates ATP. G52 contacts UMP. ATP-binding residues include G53 and R57. UMP-binding positions include D72 and 133–140 (TGNPFFTT). Residues T160, Y166, and D169 each coordinate ATP.

It belongs to the UMP kinase family. In terms of assembly, homohexamer.

The protein resides in the cytoplasm. It carries out the reaction UMP + ATP = UDP + ADP. Its pathway is pyrimidine metabolism; CTP biosynthesis via de novo pathway; UDP from UMP (UMPK route): step 1/1. Its activity is regulated as follows. Inhibited by UTP. Catalyzes the reversible phosphorylation of UMP to UDP. This Phocaeicola vulgatus (strain ATCC 8482 / DSM 1447 / JCM 5826 / CCUG 4940 / NBRC 14291 / NCTC 11154) (Bacteroides vulgatus) protein is Uridylate kinase.